Reading from the N-terminus, the 447-residue chain is tRNA (guanine(37)-N(1))-methyltransferase (447 aa).

Residues His-241, 285–286 (DL), and 313–314 (DV) contribute to the S-adenosyl-L-methionine site.

It belongs to the class I-like SAM-binding methyltransferase superfamily. TRM5/TYW2 family. In terms of assembly, monomer.

The protein resides in the mitochondrion matrix. It localises to the nucleus. Its subcellular location is the cytoplasm. It catalyses the reaction guanosine(37) in tRNA + S-adenosyl-L-methionine = N(1)-methylguanosine(37) in tRNA + S-adenosyl-L-homocysteine + H(+). Specifically methylates the N1 position of guanosine-37 in various cytoplasmic and mitochondrial tRNAs. Methylation is not dependent on the nature of the nucleoside 5' of the target nucleoside. This is the first step in the biosynthesis of wybutosine (yW), a modified base adjacent to the anticodon of tRNAs and required for accurate decoding. In Giardia intestinalis (strain ATCC 50803 / WB clone C6) (Giardia lamblia), this protein is tRNA (guanine(37)-N(1))-methyltransferase.